Here is a 207-residue protein sequence, read N- to C-terminus: Outer-membrane lipoprotein carrier protein (207 aa).

Residues 1 to 21 (MRLIRMLLATALTFSVIPAHA) form the signal peptide.

Belongs to the LolA family. As to quaternary structure, monomer.

The protein localises to the periplasm. Its function is as follows. Participates in the translocation of lipoproteins from the inner membrane to the outer membrane. Only forms a complex with a lipoprotein if the residue after the N-terminal Cys is not an aspartate (The Asp acts as a targeting signal to indicate that the lipoprotein should stay in the inner membrane). This is Outer-membrane lipoprotein carrier protein from Pseudomonas syringae pv. tomato (strain ATCC BAA-871 / DC3000).